Reading from the N-terminus, the 468-residue chain is MDYLPIFCRLDNKPVLLVGGGEVAERKARLLLDAGARLTVVSPALDPELAALATSGTIDWLAAEFEPAHLTGKWLVVAATDRREVNALVYQSANQAGIFANVVDDPKRSSFIMPSIIDRSPLMVAISSGGKAPVLARLLREKLEALLPQHLGAVAAFAGGLRARVKARFASMGERRQFWERLLSADRLGQALARGDKASANQLADTLFAEETGAKGEVILVGAGPGDPGLLTLHALRHMQQADLVVYDQLVSDEVMALVRRDARRIFVGKQAGNHCVPQEGINQLLLEEASKGQRVVRLKGGDPFIFGRGGEELETLVGSGVGFQVVPGITAASGCAAYAGIPLTHRDHAQSVRFVTAHGKGGTQDLDWPLLARDQQTLVFYMGLSSCATIRQKLTAHGKAGTTPVALIERGTQLNQRVIRGTLDQLPELAVGVESPALIMVGSVVTLADKLAWFGQTNHGVQAAALA.

The interval 1 to 204 (MDYLPIFCRL…GDKASANQLA (204 aa)) is precorrin-2 dehydrogenase /sirohydrochlorin ferrochelatase. NAD(+) contacts are provided by residues 22-23 (EV) and 43-44 (PA). S128 is subject to Phosphoserine. Residues 216–468 (GEVILVGAGP…NHGVQAAALA (253 aa)) are uroporphyrinogen-III C-methyltransferase. P225 serves as a coordination point for S-adenosyl-L-methionine. D248 serves as the catalytic Proton acceptor. K270 serves as the catalytic Proton donor. S-adenosyl-L-methionine contacts are provided by residues 301 to 303 (GGD), I306, 331 to 332 (TA), M383, and G412.

It in the N-terminal section; belongs to the precorrin-2 dehydrogenase / sirohydrochlorin ferrochelatase family. This sequence in the C-terminal section; belongs to the precorrin methyltransferase family.

It catalyses the reaction uroporphyrinogen III + 2 S-adenosyl-L-methionine = precorrin-2 + 2 S-adenosyl-L-homocysteine + H(+). The catalysed reaction is precorrin-2 + NAD(+) = sirohydrochlorin + NADH + 2 H(+). It carries out the reaction siroheme + 2 H(+) = sirohydrochlorin + Fe(2+). It participates in cofactor biosynthesis; adenosylcobalamin biosynthesis; precorrin-2 from uroporphyrinogen III: step 1/1. The protein operates within cofactor biosynthesis; adenosylcobalamin biosynthesis; sirohydrochlorin from precorrin-2: step 1/1. It functions in the pathway porphyrin-containing compound metabolism; siroheme biosynthesis; precorrin-2 from uroporphyrinogen III: step 1/1. Its pathway is porphyrin-containing compound metabolism; siroheme biosynthesis; siroheme from sirohydrochlorin: step 1/1. It participates in porphyrin-containing compound metabolism; siroheme biosynthesis; sirohydrochlorin from precorrin-2: step 1/1. Its function is as follows. Multifunctional enzyme that catalyzes the SAM-dependent methylations of uroporphyrinogen III at position C-2 and C-7 to form precorrin-2 via precorrin-1. Then it catalyzes the NAD-dependent ring dehydrogenation of precorrin-2 to yield sirohydrochlorin. Finally, it catalyzes the ferrochelation of sirohydrochlorin to yield siroheme. This is Siroheme synthase 1 from Aeromonas salmonicida (strain A449).